Here is an 84-residue protein sequence, read N- to C-terminus: Small ribosomal subunit protein uS17c (84 aa).

Belongs to the universal ribosomal protein uS17 family. As to quaternary structure, part of the 30S ribosomal subunit.

Its subcellular location is the plastid. The protein resides in the chloroplast. One of the primary rRNA binding proteins, it binds specifically to the 5'-end of 16S ribosomal RNA. The sequence is that of Small ribosomal subunit protein uS17c (rps17) from Trieres chinensis (Marine centric diatom).